A 132-amino-acid polypeptide reads, in one-letter code: Small ribosomal subunit protein uS8 (132 aa).

The protein belongs to the universal ribosomal protein uS8 family. As to quaternary structure, part of the 30S ribosomal subunit. Contacts proteins S5 and S12.

Functionally, one of the primary rRNA binding proteins, it binds directly to 16S rRNA central domain where it helps coordinate assembly of the platform of the 30S subunit. The sequence is that of Small ribosomal subunit protein uS8 from Geobacillus kaustophilus (strain HTA426).